The sequence spans 47 residues: Variabilin (47 aa).

Residues 32 to 34 carry the Cell attachment site motif; it reads RGD.

In terms of processing, contains 2 disulfide bonds. In terms of tissue distribution, expressed in salivary glands.

The protein localises to the secreted. Its function is as follows. Potently inhibits platelet aggregation induced by ADP (IC(50)=157 nM, complete inhibition at 514 nM). Also inhibits platelet aggregation induced by collagen and by the thrombin receptor peptide SFLLRNP. Is a potent antagonist of the fibrinogen receptor glycoprotein IIb-IIIa (ITGA2B/ITGB3) and the vitronectin receptor alpha-v/beta-3 (ITGAV/ITGB3). This chain is Variabilin, found in Dermacentor variabilis (American dog tick).